A 77-amino-acid chain; its full sequence is Secapin (77 aa).

An N-terminal signal peptide occupies residues 1–32 (MKNYSKNATHLITVLLFSFVVILLIIPSKCEA). Positions 33–52 (VSNDMQPLEARSADLIPEPR) are excised as a propeptide. Cysteine 61 and cysteine 72 are disulfide-bonded.

Belongs to the secapin family. Expressed by the venom gland.

The protein localises to the secreted. Functionally, nontoxic peptide. This is Secapin from Vespa velutina nigrithorax (Hornet).